The sequence spans 351 residues: Inositol monophosphatase 3 (351 aa).

Residues 11-31 (LGIGVFCLLALGVLYHVYSGF) traverse the membrane as a helical segment. Mg(2+) is bound by residues Glu-121, Asp-162, Leu-164, Asp-165, and Asp-288. Glu-121 contacts substrate. Substrate is bound by residues 164 to 167 (LDAT) and Asp-288.

This sequence belongs to the inositol monophosphatase superfamily. Requires Mg(2+) as cofactor.

It is found in the membrane. It catalyses the reaction a myo-inositol phosphate + H2O = myo-inositol + phosphate. It functions in the pathway polyol metabolism; myo-inositol biosynthesis; myo-inositol from D-glucose 6-phosphate: step 2/2. The polypeptide is Inositol monophosphatase 3 (bpnt2) (Xenopus laevis (African clawed frog)).